A 129-amino-acid chain; its full sequence is MAKTPVRTRKRVKKQVVDGVAHIHASFNNTIVTITDRQGNALAWATAGGSGFRGSRKSTPFAAQVAAERCAEVVKEFGLKNLEVMVKGPGPGRESTIRALNAAGFRITNITDVTPIPHNGCRPPKKRRV.

This sequence belongs to the universal ribosomal protein uS11 family. In terms of assembly, part of the 30S ribosomal subunit. Interacts with proteins S7 and S18. Binds to IF-3.

Located on the platform of the 30S subunit, it bridges several disparate RNA helices of the 16S rRNA. Forms part of the Shine-Dalgarno cleft in the 70S ribosome. The polypeptide is Small ribosomal subunit protein uS11 (Histophilus somni (strain 129Pt) (Haemophilus somnus)).